A 275-amino-acid chain; its full sequence is Large ribosomal subunit protein uL2 (275 aa).

The segment at 236 to 263 is disordered; the sequence is EGRGKGQHPVTPWGMPTKGYKTRRGRRA.

It belongs to the universal ribosomal protein uL2 family. In terms of assembly, part of the 50S ribosomal subunit. Forms a bridge to the 30S subunit in the 70S ribosome.

Functionally, one of the primary rRNA binding proteins. Required for association of the 30S and 50S subunits to form the 70S ribosome, for tRNA binding and peptide bond formation. It has been suggested to have peptidyltransferase activity; this is somewhat controversial. Makes several contacts with the 16S rRNA in the 70S ribosome. In Pseudothermotoga lettingae (strain ATCC BAA-301 / DSM 14385 / NBRC 107922 / TMO) (Thermotoga lettingae), this protein is Large ribosomal subunit protein uL2.